The following is a 110-amino-acid chain: Endoribonuclease SymE (110 aa).

The 46-residue stretch at 29–74 (SSYPEYTRIPAITLKGQWLEDAGFTTGTQVDVRVMNGCIVLTAQQP) folds into the SpoVT-AbrB domain.

It belongs to the SymE family.

The protein localises to the cytoplasm. Its function is as follows. Involved in the degradation and recycling of damaged RNA. It is itself a target for degradation by the ATP-dependent protease Lon. This chain is Endoribonuclease SymE, found in Salmonella choleraesuis (strain SC-B67).